Here is a 213-residue protein sequence, read N- to C-terminus: Uridine kinase (213 aa).

15–22 (GASASGKS) provides a ligand contact to ATP.

Belongs to the uridine kinase family.

The protein localises to the cytoplasm. The enzyme catalyses uridine + ATP = UMP + ADP + H(+). It carries out the reaction cytidine + ATP = CMP + ADP + H(+). Its pathway is pyrimidine metabolism; CTP biosynthesis via salvage pathway; CTP from cytidine: step 1/3. It functions in the pathway pyrimidine metabolism; UMP biosynthesis via salvage pathway; UMP from uridine: step 1/1. In Cronobacter sakazakii (strain ATCC BAA-894) (Enterobacter sakazakii), this protein is Uridine kinase.